The following is a 373-amino-acid chain: MFSKSLEALHHVKRYRKRELFDPLLKDYASNDYLGLSVKKDLLQNAFDKLQSFDCHSPKASMLVNGYHPLHAELEERLADLLEFESALLVGSGFLGNLALIDTLLVKNALLFMDAHYHASGIFSTKIKPNQVIFFSHNDIKDLKQKLFNAPKNKLKFIAIEGVYSMDASIAPYDFYEIIQETPNAFLIVDEAHSFGTIGENLLGFLEYHRIKEKDKIIKLSTFSKALASYGACVLAPLQVIEFLTNRAKSVIYTTALSLLDTALTLAHLEYFIAQKQELKNELSKHQQIIFETLGVRTPTGFFTLEFENNPALLNAQYFLKEKGFLVGAIRPPTVSKPLLRVSLSLKNSLEDTKELANALLDYSKIQSSFKSG.

Position 16 (arginine 16) interacts with substrate. 93–94 (GF) contacts pyridoxal 5'-phosphate. Histidine 118 lines the substrate pocket. Pyridoxal 5'-phosphate is bound by residues serine 165, 190–193 (DEAH), and 222–225 (TFSK). Lysine 225 bears the N6-(pyridoxal phosphate)lysine mark. Threonine 334 is a binding site for substrate.

The protein belongs to the class-II pyridoxal-phosphate-dependent aminotransferase family. BioF subfamily. As to quaternary structure, homodimer. Requires pyridoxal 5'-phosphate as cofactor.

It catalyses the reaction 6-carboxyhexanoyl-[ACP] + L-alanine + H(+) = (8S)-8-amino-7-oxononanoate + holo-[ACP] + CO2. It participates in cofactor biosynthesis; biotin biosynthesis. Functionally, catalyzes the decarboxylative condensation of pimeloyl-[acyl-carrier protein] and L-alanine to produce 8-amino-7-oxononanoate (AON), [acyl-carrier protein], and carbon dioxide. The chain is 8-amino-7-oxononanoate synthase from Helicobacter pylori (strain J99 / ATCC 700824) (Campylobacter pylori J99).